The sequence spans 132 residues: Small ribosomal subunit protein uS8 (132 aa).

The protein belongs to the universal ribosomal protein uS8 family. Part of the 30S ribosomal subunit. Contacts proteins S5 and S12.

Functionally, one of the primary rRNA binding proteins, it binds directly to 16S rRNA central domain where it helps coordinate assembly of the platform of the 30S subunit. In Oceanobacillus iheyensis (strain DSM 14371 / CIP 107618 / JCM 11309 / KCTC 3954 / HTE831), this protein is Small ribosomal subunit protein uS8.